The following is a 280-amino-acid chain: Nucleotide-binding protein Dgeo_0723 (280 aa).

ATP is bound at residue 8–15; it reads GLSGSGKS. 57 to 60 provides a ligand contact to GTP; it reads DART.

It belongs to the RapZ-like family.

Displays ATPase and GTPase activities. The chain is Nucleotide-binding protein Dgeo_0723 from Deinococcus geothermalis (strain DSM 11300 / CIP 105573 / AG-3a).